Reading from the N-terminus, the 333-residue chain is DNA-directed RNA polymerase subunit alpha (333 aa).

An alpha N-terminal domain (alpha-NTD) region spans residues 1-234; sequence MQISVNEFLT…QQLAAFVDLK (234 aa). The segment at 248–333 is alpha C-terminal domain (alpha-CTD); it reads IDPILLRPVD…SLKKDDKATA (86 aa).

It belongs to the RNA polymerase alpha chain family. Homodimer. The RNAP catalytic core consists of 2 alpha, 1 beta, 1 beta' and 1 omega subunit. When a sigma factor is associated with the core the holoenzyme is formed, which can initiate transcription.

The enzyme catalyses RNA(n) + a ribonucleoside 5'-triphosphate = RNA(n+1) + diphosphate. Functionally, DNA-dependent RNA polymerase catalyzes the transcription of DNA into RNA using the four ribonucleoside triphosphates as substrates. This is DNA-directed RNA polymerase subunit alpha from Pseudomonas entomophila (strain L48).